The chain runs to 451 residues: Protein SAR DEFICIENT 1 (451 aa).

Positions 149–270 (DKWTSDEFES…AFHKKLSSRH (122 aa)) are DNA-binding.

Belongs to the plant ACBP60 protein family. In terms of assembly, (Microbial infection) Interacts with V.dahliae SCP41.

Its subcellular location is the nucleus. Functionally, transcription activator that binds DNA in a sequence-specific manner, 5'-GAAATTTTGG-3', to promote the expression of target genes. Recruited to the promoter of ICS1 and other defense-related genes (e.g. PR1 and SID2) in response to both biotic (e.g. Pseudomonas syringae pv. maculicola ES4326) and abiotic stresses (e.g. UV-B), thus triggering slow defense responses by stimulating salicylic acid (SA) biosynthesis. Required for basal and systemic acquired resistance to P.syringae pv. maculicola and Hyaloperonospora arabidopsidis. This Arabidopsis thaliana (Mouse-ear cress) protein is Protein SAR DEFICIENT 1.